A 348-amino-acid polypeptide reads, in one-letter code: Papaya proteinase 4 (348 aa).

A signal peptide spans 1-18 (MAIICSFSKLLFVAICLF). The propeptide at 19-132 (GHMSLSYCDF…EEFVNEDIVD (114 aa)) is activation peptide. 3 disulfides stabilise this stretch: Cys154-Cys195, Cys188-Cys227, and Cys285-Cys336. Residue Cys157 is part of the active site. Residues His291 and Asn311 contribute to the active site.

It belongs to the peptidase C1 family.

It carries out the reaction Preferential cleavage: Gly-|-Xaa, in proteins and in small molecule substrates.. Not inhibited by cystatin. In terms of biological role, thiol protease with a substrate specificity very different from the other thiol proteases. The protein is Papaya proteinase 4 of Carica papaya (Papaya).